Reading from the N-terminus, the 405-residue chain is S-arrestin (405 aa).

Thr234 is modified (phosphothreonine).

This sequence belongs to the arrestin family. Monomer. Homodimer. Homotetramer. Interacts with RHO (via the phosphorylated C-terminus).

Its subcellular location is the cell projection. It is found in the cilium. The protein localises to the photoreceptor outer segment. It localises to the membrane. Binds to photoactivated, phosphorylated RHO and terminates RHO signaling via G-proteins by competing with G-proteins for the same binding site on RHO. May play a role in preventing light-dependent degeneration of retinal photoreceptor cells. In Canis lupus familiaris (Dog), this protein is S-arrestin (SAG).